The chain runs to 92 residues: Large ribosomal subunit protein eL31 (92 aa).

The protein belongs to the eukaryotic ribosomal protein eL31 family.

The sequence is that of Large ribosomal subunit protein eL31 from Halorubrum lacusprofundi (strain ATCC 49239 / DSM 5036 / JCM 8891 / ACAM 34).